The following is a 938-amino-acid chain: Kinesin-like protein KIN-7B (938 aa).

Residues 29 to 348 form the Kinesin motor domain; it reads KILVTVRMRP…LSFAMSAKEV (320 aa). An ATP-binding site is contributed by 113 to 120; that stretch reads GQTSSGKT. A coiled-coil region spans residues 357–431; it reads VVSEKKLLKH…DLERKAKERK (75 aa). The segment at 450–481 is disordered; the sequence is TKEESIPSKSVPSSRRTARDRRKDNVRQSLTS. Positions 555–590 form a coiled coil; it reads KANLKEEINRLNSQEIAALEKKLECVQNTIDMLVSS. Residues 628-678 are disordered; the sequence is CSPLSGTENKDPESNVVSANSAPVSFGATPPKRDDNRCRTQSREGTPVSRQ. Over residues 641–652 the composition is skewed to low complexity; sequence SNVVSANSAPVS. Over residues 658-669 the composition is skewed to basic and acidic residues; it reads PKRDDNRCRTQS.

It belongs to the TRAFAC class myosin-kinesin ATPase superfamily. Kinesin family. KIN-7 subfamily. In terms of assembly, interacts with ANP3. Interacts with TIO/FU. As to expression, expressed in roots, stems, flowers, pollen mother cells and embryos.

The protein localises to the cytoplasm. Its subcellular location is the cytoskeleton. It localises to the phragmoplast. Probable plus end-directed motor protein that functions in the NACK-PQR (ANP3-MKK6-MPK4) MAP kinase signaling pathway, which is essential for somatic cell cytokinesis, especially for the cell-plate formation and its expansion. May regulate the activity and the localization of ANP3, probably by association through the non-catalytic region of the kinase. Functionally redundant with NACK1 and essential to promote the progression of cytokinesis and for cellularization (formation of the cell plate) during microgametogenesis and megagametogenesis. This is Kinesin-like protein KIN-7B from Arabidopsis thaliana (Mouse-ear cress).